Consider the following 339-residue polypeptide: AT-hook motif nuclear-localized protein 26 (339 aa).

A compositionally biased stretch (polar residues) spans M1 to S12. Disordered regions lie at residues M1–K132 and M273–Y339. Positions L24 to F45 are enriched in low complexity. The segment covering N82–S93 has biased composition (polar residues). Residues G102–G113 are compositionally biased toward gly residues. Positions R118 to K130 form a DNA-binding region, a.T hook. The 138-residue stretch at A142–G279 folds into the PPC domain. Gly residues predominate over residues Q278–G291. Residues S292–G310 are compositionally biased toward low complexity.

The protein resides in the nucleus. Transcription factor that specifically binds AT-rich DNA sequences related to the nuclear matrix attachment regions (MARs). This is AT-hook motif nuclear-localized protein 26 from Arabidopsis thaliana (Mouse-ear cress).